A 381-amino-acid polypeptide reads, in one-letter code: Molybdenum import ATP-binding protein ModC (381 aa).

One can recognise an ABC transporter domain in the interval 5–238; that stretch reads SRSIQAQFRG…PALPLAASRD (234 aa). 37-44 is a binding site for ATP; it reads GPSGCGKS. Positions 297–367 constitute a Mop domain; it reads NTSILNVLPA…VKGVALAPGR (71 aa).

The protein belongs to the ABC transporter superfamily. Molybdate importer (TC 3.A.1.8) family. As to quaternary structure, the complex is composed of two ATP-binding proteins (ModC), two transmembrane proteins (ModB) and a solute-binding protein (ModA).

It is found in the cell inner membrane. The enzyme catalyses molybdate(out) + ATP + H2O = molybdate(in) + ADP + phosphate + H(+). Functionally, part of the ABC transporter complex ModABC involved in molybdenum import. Responsible for energy coupling to the transport system. The protein is Molybdenum import ATP-binding protein ModC of Rhodopseudomonas palustris (strain BisB18).